The primary structure comprises 125 residues: MPTISQLVRKGRKTLAAKSTAPALKECPQKRGVCTVVKTTTPKKPNSALRKIARVRLTNGYEVTAYIPGVGHNLQEHSVVLIRGGRVKDLPGVRYHIVRGTLDAAGVADRKQARSKYGAKKPKQK.

Asp89 carries the post-translational modification 3-methylthioaspartic acid.

This sequence belongs to the universal ribosomal protein uS12 family. Part of the 30S ribosomal subunit. Contacts proteins S8 and S17. May interact with IF1 in the 30S initiation complex.

With S4 and S5 plays an important role in translational accuracy. Its function is as follows. Interacts with and stabilizes bases of the 16S rRNA that are involved in tRNA selection in the A site and with the mRNA backbone. Located at the interface of the 30S and 50S subunits, it traverses the body of the 30S subunit contacting proteins on the other side and probably holding the rRNA structure together. The combined cluster of proteins S8, S12 and S17 appears to hold together the shoulder and platform of the 30S subunit. The polypeptide is Small ribosomal subunit protein uS12 (Clostridium acetobutylicum (strain ATCC 824 / DSM 792 / JCM 1419 / IAM 19013 / LMG 5710 / NBRC 13948 / NRRL B-527 / VKM B-1787 / 2291 / W)).